The following is a 326-amino-acid chain: Histone-lysine N-methyltransferase Suv4-20 (326 aa).

The region spanning 163–273 (QECTRYSLEG…AGDEITCFYG (111 aa)) is the SET domain. Residues 294–313 (RGKFSTSDEEENDEPSALSE) form a disordered region.

This sequence belongs to the class V-like SAM-binding methyltransferase superfamily. Histone-lysine methyltransferase family. Suvar4-20 subfamily.

It is found in the nucleus. The protein resides in the chromosome. The catalysed reaction is N(6)-methyl-L-lysyl(20)-[histone H4] + S-adenosyl-L-methionine = N(6),N(6)-dimethyl-L-lysyl(20)-[histone H4] + S-adenosyl-L-homocysteine + H(+). The enzyme catalyses N(6),N(6)-dimethyl-L-lysyl(20)-[histone H4] + S-adenosyl-L-methionine = N(6),N(6),N(6)-trimethyl-L-lysyl(20)-[histone H4] + S-adenosyl-L-homocysteine + H(+). Its function is as follows. Histone methyltransferase that specifically di- and trimethylates 'Lys-20' of histone H4 (H4K20me2/me3). H4 'Lys-20' trimethylation represents a specific tag for epigenetic transcriptional repression. Contributes to dosage compensation of X chromosome-relative to autosome-linked gene expression, possibly by converting H4K20me1 to H4K20m2/me3 on autosomes. Involved in the regulation of growth and body fat metabolism downstream of the TOR complex 2 pathway. This chain is Histone-lysine N-methyltransferase Suv4-20, found in Caenorhabditis briggsae.